The primary structure comprises 432 residues: Maltoporin (432 aa).

Residues 1–22 (MKKVSVIAAAVAATLAAGSAFA) form the signal peptide.

Belongs to the porin LamB (TC 1.B.3) family. Homotrimer formed of three 18-stranded antiparallel beta-barrels, containing three independent channels.

It is found in the cell outer membrane. It catalyses the reaction beta-maltose(in) = beta-maltose(out). In terms of biological role, involved in the transport of maltose and maltodextrins. This is Maltoporin from Vibrio parahaemolyticus serotype O3:K6 (strain RIMD 2210633).